We begin with the raw amino-acid sequence, 263 residues long: Copper homeostasis protein cutC homolog (263 aa).

It belongs to the CutC family.

In terms of biological role, involved in copper homeostasis. This is Copper homeostasis protein cutC homolog from Drosophila melanogaster (Fruit fly).